The chain runs to 587 residues: ATP-dependent lipid A-core flippase (587 aa).

Helical transmembrane passes span 31-51 (LIVS…LIYL), 68-88 (LKMM…TNFI), 145-165 (GSLI…AVMF), 166-186 (YTSW…AVLI), and 259-279 (VQVI…TPLI). Residues 32-315 (IVSGVALVFN…LTAVNAQFQS (284 aa)) form the ABC transmembrane type-1 domain. An ABC transporter domain is found at 347–583 (LEFKNVSFAY…NGAYKQLHSM (237 aa)). 381-388 (GRSGSGKS) contacts ATP.

Belongs to the ABC transporter superfamily. Lipid exporter (TC 3.A.1.106) family. As to quaternary structure, homodimer.

It is found in the cell inner membrane. It catalyses the reaction ATP + H2O + lipid A-core oligosaccharideSide 1 = ADP + phosphate + lipid A-core oligosaccharideSide 2.. In terms of biological role, involved in lipopolysaccharide (LPS) biosynthesis. Translocates lipid A-core from the inner to the outer leaflet of the inner membrane. Transmembrane domains (TMD) form a pore in the inner membrane and the ATP-binding domain (NBD) is responsible for energy generation. This chain is ATP-dependent lipid A-core flippase, found in Haemophilus influenzae (strain ATCC 51907 / DSM 11121 / KW20 / Rd).